The chain runs to 78 residues: Small ribosomal subunit protein bS18 (78 aa).

Belongs to the bacterial ribosomal protein bS18 family. In terms of assembly, part of the 30S ribosomal subunit. Forms a tight heterodimer with protein bS6.

Functionally, binds as a heterodimer with protein bS6 to the central domain of the 16S rRNA, where it helps stabilize the platform of the 30S subunit. The chain is Small ribosomal subunit protein bS18 from Pseudothermotoga lettingae (strain ATCC BAA-301 / DSM 14385 / NBRC 107922 / TMO) (Thermotoga lettingae).